Here is a 330-residue protein sequence, read N- to C-terminus: Probable deoxyhypusine synthase (330 aa).

The segment at methionine 1–aspartate 25 is disordered. The Nucleophile role is filled by lysine 298.

It belongs to the deoxyhypusine synthase family. It depends on NAD(+) as a cofactor.

The enzyme catalyses [eIF5A protein]-L-lysine + spermidine = [eIF5A protein]-deoxyhypusine + propane-1,3-diamine. It functions in the pathway protein modification; eIF5A hypusination. Functionally, catalyzes the NAD-dependent oxidative cleavage of spermidine and the subsequent transfer of the butylamine moiety of spermidine to the epsilon-amino group of a specific lysine residue of the eIF-5A precursor protein to form the intermediate deoxyhypusine residue. This Halobacterium salinarum (strain ATCC 29341 / DSM 671 / R1) protein is Probable deoxyhypusine synthase.